The primary structure comprises 451 residues: UPF0210 protein NGO_1297 (451 aa).

It belongs to the UPF0210 family. As to quaternary structure, homodimer.

The sequence is that of UPF0210 protein NGO_1297 from Neisseria gonorrhoeae (strain ATCC 700825 / FA 1090).